Consider the following 454-residue polypeptide: Inner membrane transport protein YajR (454 aa).

Over 1-14 (MNDYKMTPGERRAT) the chain is Periplasmic. Residues 15 to 35 (WGLGTVFSLRMLGMFMVLPVL) traverse the membrane as a helical segment. The Cytoplasmic segment spans residues 36–47 (TTYGMALQGASE). The chain crosses the membrane as a helical span at residues 48–68 (ALIGIAIGIYGLTQAVFQIPF). Residues 69-84 (GLLSDRIGRKPLIVGG) lie on the Periplasmic side of the membrane. A helical transmembrane segment spans residues 85–105 (LAVFAAGSVIAALSDSIWGII). Residues 106–137 (LGRALQGSGAIAAAVMALLSDLTREQNRTKAM) lie on the Cytoplasmic side of the membrane. A helical membrane pass occupies residues 138 to 158 (AFIGVSFGITFAIAMVLGPII). Over 159–165 (THKLGLH) the chain is Periplasmic. Residues 166–186 (ALFWMIAILATTGIALTIWVV) form a helical membrane-spanning segment. The Cytoplasmic portion of the chain corresponds to 187–216 (PNSSTHVLNRESGMVKGSFSKVLAEPRLLK). Residues 217–237 (LNFGIMCLHILLMSTFVALPG) traverse the membrane as a helical segment. Topologically, residues 238 to 252 (QLADAGFPAAEHWKV) are periplasmic. A helical membrane pass occupies residues 253–273 (YLATMLIAFGSVVPFIIYAEV). Over 274–279 (KRKMKQ) the chain is Cytoplasmic. Residues 280–300 (VFVFCVGLIVVAEIVLWNAQT) form a helical membrane-spanning segment. Over 301–306 (QFWQLV) the chain is Periplasmic. Residues 307–327 (VGVQLFFVAFNLMEALLPSLI) traverse the membrane as a helical segment. Topologically, residues 328–340 (SKESPAGYKGTAM) are cytoplasmic. Residues 341 to 361 (GVYSTSQFLGVAIGGSLGGWI) form a helical membrane-spanning segment. The Periplasmic portion of the chain corresponds to 362-363 (NG). Residues 364-384 (MFDGQGVFLAGAMLAAVWLTV) form a helical membrane-spanning segment. Residues 385 to 454 (ASTMKEPPYV…FEIEQAIRQA (70 aa)) lie on the Cytoplasmic side of the membrane.

It belongs to the major facilitator superfamily.

The protein resides in the cell inner membrane. This is Inner membrane transport protein YajR (yajR) from Escherichia coli (strain K12).